We begin with the raw amino-acid sequence, 277 residues long: Kallikrein-13 (277 aa).

The signal sequence occupies residues methionine 1–serine 16. An N-linked (GlcNAc...) asparagine glycan is attached at asparagine 30. Positions leucine 36–arginine 263 constitute a Peptidase S1 domain. 5 cysteine pairs are disulfide-bonded: cysteine 42/cysteine 178, cysteine 61/cysteine 77, cysteine 157/cysteine 224, cysteine 189/cysteine 203, and cysteine 214/cysteine 239. Residues histidine 76 and aspartate 124 each act as charge relay system in the active site. Serine 218 acts as the Charge relay system in catalysis. Asparagine 225 carries an N-linked (GlcNAc...) asparagine glycan.

Belongs to the peptidase S1 family. Kallikrein subfamily. As to expression, expressed in prostate, breast, testis and salivary gland.

The protein localises to the secreted. The sequence is that of Kallikrein-13 (KLK13) from Homo sapiens (Human).